The primary structure comprises 158 residues: SsrA-binding protein (158 aa).

This sequence belongs to the SmpB family.

It is found in the cytoplasm. Its function is as follows. Required for rescue of stalled ribosomes mediated by trans-translation. Binds to transfer-messenger RNA (tmRNA), required for stable association of tmRNA with ribosomes. tmRNA and SmpB together mimic tRNA shape, replacing the anticodon stem-loop with SmpB. tmRNA is encoded by the ssrA gene; the 2 termini fold to resemble tRNA(Ala) and it encodes a 'tag peptide', a short internal open reading frame. During trans-translation Ala-aminoacylated tmRNA acts like a tRNA, entering the A-site of stalled ribosomes, displacing the stalled mRNA. The ribosome then switches to translate the ORF on the tmRNA; the nascent peptide is terminated with the 'tag peptide' encoded by the tmRNA and targeted for degradation. The ribosome is freed to recommence translation, which seems to be the essential function of trans-translation. The chain is SsrA-binding protein from Psychrobacter sp. (strain PRwf-1).